A 441-amino-acid polypeptide reads, in one-letter code: MPKGFLVKRSRKSPPVSYRVREEEEPRGESLPGWMLLATMCPTGGAPPPCSPDRATQAPCCSSPRPPPAGQFGNPDTVQQALYSPTRPVSREQRERKYLGSPVSAESFPGLGTSSEALLYPPTGTANGHHGLALLPPVSSSSSVSRSQGKRPAPEPDSKPAAMPGTGPGATSSSAPSKPPAAKKTKAIRKLTFEDEVTTSPVLGLKIKEGPVEPPRPRAASSGPRPLGEFICQLCKEEYSDPFSLAQHKCSRIVRVEYRCPECHKVFSCPANLASHRRWHKPRPPVASTAQAKEEPLSDRDTPSPGASESGSEDGLYECPRCARKFRRQAYLRKHLLSHQAAKEPEEPGVMMFPGEEQRAKSPPSLNAQECHPCPVCGETFPGKSSQERHIRLLHSSQLYPCKYCPATFYSSPGLTRHINKCHPSENRQVILLQVPVRPAC.

The span at 1–12 shows a compositional bias: basic residues; sequence MPKGFLVKRSRK. Residues 1 to 20 are SNAG domain; it reads MPKGFLVKRSRKSPPVSYRV. Disordered stretches follow at residues 1 to 31, 43 to 189, 205 to 224, and 278 to 316; these read MPKGFLVKRSRKSPPVSYRVREEEEPRGESL, TGGA…KAIR, LKIKEGPVEPPRPRAASSGP, and RWHKPRPPVASTAQAKEEPLSDRDTPSPGASESGSEDGL. Positions 19-28 are enriched in basic and acidic residues; that stretch reads RVREEEEPRG. Positions 74–83 are enriched in polar residues; it reads NPDTVQQALY. Over residues 89 to 98 the composition is skewed to basic and acidic residues; the sequence is VSREQRERKY. Composition is skewed to low complexity over residues 138–147 and 169–180; these read VSSSSSVSRS and GATSSSAPSKPP. The C2H2-type 1 zinc finger occupies 258 to 280; it reads YRCPECHKVFSCPANLASHRRWH. Basic and acidic residues predominate over residues 292–302; that stretch reads AKEEPLSDRDT. C2H2-type zinc fingers lie at residues 317-339, 372-395, and 400-423; these read YECPRCARKFRRQAYLRKHLLSH, HPCPVCGETFPGKSSQERHIRLLH, and YPCKYCPATFYSSPGLTRHINKCH.

Belongs to the INSM1 family.

The protein resides in the nucleus. Its function is as follows. May act as a transcriptional regulator. Plays a role in noradrenergic neuron, pancreatic and gastrointestinal endocrine cells differentiation during embryonic development. This Xenopus tropicalis (Western clawed frog) protein is Insulinoma-associated protein 1 (insm1).